Reading from the N-terminus, the 378-residue chain is Wnt inhibitory factor 1 (378 aa).

A signal peptide spans 1 to 28; it reads MAFRTPAVQLHLKACVLLLLGGLLEAAY. Residues 36-175 form the WIF domain; it reads MWIDANQARI…PHNAIFFKTC (140 aa). Residue Asn-86 is glycosylated (N-linked (GlcNAc...) asparagine). Cystine bridges form between Cys-138/Cys-175, Cys-180/Cys-190, Cys-184/Cys-196, Cys-212/Cys-222, Cys-216/Cys-228, and Cys-230/Cys-239. EGF-like domains are found at residues 176–205, 208–240, 243–272, 272–304, and 305–336; these read QRAKCPGGCRNGGYCNERQVCECQDGFYGV, EKALCSPRCLNGGLCMSPGVCICPPGYFGSSCE, NCSTTCLNGGTCFHPGKCICAVSFEGVRCE, ELSKCRQPCRNGGKCTGRNKCKCSKGYHGDLCS, and KAVCEPSCGAHGTCVEPNRCQCREGWHGRHCN. N-linked (GlcNAc...) asparagine glycosylation is present at Asn-243. 9 cysteine pairs are disulfide-bonded: Cys-244/Cys-254, Cys-248/Cys-260, Cys-262/Cys-271, Cys-276/Cys-286, Cys-280/Cys-292, Cys-294/Cys-303, Cys-308/Cys-318, Cys-312/Cys-324, and Cys-326/Cys-335. Residues 343–378 are disordered; sequence VSNSQRVSPSKHKSPSVAAAKEAPETSQPSETNYVV. The segment covering 367–378 has biased composition (polar residues); that stretch reads ETSQPSETNYVV.

Highly expressed in unsegmented paraxial mesoderm.

It localises to the secreted. Functionally, binds to WNT proteins and inhibits their activities. May be involved in mesoderm segmentation. This Danio rerio (Zebrafish) protein is Wnt inhibitory factor 1 (wif1).